The chain runs to 83 residues: Beta-defensin 119 (83 aa).

Positions 1–20 (MKFLFLFLAILLAMEPVVSG) are cleaved as a signal peptide. Cystine bridges form between Cys-27-Cys-54, Cys-34-Cys-48, and Cys-38-Cys-55.

This sequence belongs to the beta-defensin family.

It is found in the secreted. In terms of biological role, has antibacterial activity. This chain is Beta-defensin 119 (DEFB119), found in Bos taurus (Bovine).